Consider the following 369-residue polypeptide: 2-aminoethylphosphonate--pyruvate transaminase (369 aa).

At lysine 193 the chain carries N6-(pyridoxal phosphate)lysine.

This sequence belongs to the class-V pyridoxal-phosphate-dependent aminotransferase family. PhnW subfamily. Homodimer. The cofactor is pyridoxal 5'-phosphate.

The enzyme catalyses (2-aminoethyl)phosphonate + pyruvate = phosphonoacetaldehyde + L-alanine. Its function is as follows. Involved in phosphonate degradation. The protein is 2-aminoethylphosphonate--pyruvate transaminase of Burkholderia thailandensis (strain ATCC 700388 / DSM 13276 / CCUG 48851 / CIP 106301 / E264).